A 117-amino-acid chain; its full sequence is MISIILVMIGGGFGAIARSAITDYFNHKFTSKLPIATLIVNLVGSFLIGLTIGLSISTSWFPAFFVTGFLGGLTTFSTLAKELTLMMTPKFNINLFLNYSLLQFIIGFIACYIGYHI.

4 consecutive transmembrane segments (helical) span residues methionine 1–isoleucine 21, leucine 33–glycine 53, tryptophan 60–alanine 80, and leucine 95–tyrosine 115. Na(+) is bound by residues glycine 71 and threonine 74.

It belongs to the fluoride channel Fluc/FEX (TC 1.A.43) family.

The protein resides in the cell membrane. The enzyme catalyses fluoride(in) = fluoride(out). Na(+) is not transported, but it plays an essential structural role and its presence is essential for fluoride channel function. Fluoride-specific ion channel. Important for reducing fluoride concentration in the cell, thus reducing its toxicity. This Staphylococcus aureus (strain COL) protein is Fluoride-specific ion channel FluC 2.